The chain runs to 97 residues: CLAVATA3/ESR (CLE)-related protein ESR2-C (97 aa).

Residues 1–97 form a disordered region; that stretch reads TRTDDKPGVN…IGPPPFLDRY (97 aa). Hydroxyproline is present on residues Pro-47 and Pro-50. A glycan (O-linked (Ara...) hydroxyproline) is linked at Pro-50.

This sequence belongs to the CLV3/ESR signal peptide family. Post-translationally, the O-glycosylation (arabinosylation) of the hydroxyproline Pro-50 enhances binding affinity of the ESR2Cp peptide for its receptor. As to expression, seed endosperm.

The protein localises to the secreted. The protein resides in the extracellular space. Extracellular signal peptide that regulates cell fate. This is CLAVATA3/ESR (CLE)-related protein ESR2-C from Zea mays (Maize).